The chain runs to 222 residues: uncharacterized protein (222 aa).

The tract at residues 142–222 (ARRGGCVHPP…LPDPPSAGHL (81 aa)) is disordered. The span at 160–169 (QSRSISSRRA) shows a compositional bias: low complexity. A compositionally biased stretch (basic residues) spans 182–196 (PRRRPHRHRTRPQTR).

The protein belongs to the Rv1128c/1148c/1588c/1702c/1945/3466 family.

This is an uncharacterized protein from Mycobacterium tuberculosis (strain CDC 1551 / Oshkosh).